Here is a 503-residue protein sequence, read N- to C-terminus: MQTTLGPRVRTRFAPSPTGYLHVGGLRTALYNYLYAKKVGGDFIVRIEDTDQARKVEGADQSLLKTLEESGIVADESILHGGNFGPYMQSERLDTYAQYCRQLLDQNNAYYCFSTAEELDENRKLQMKQGIQPKYNRKWLPETMGGNMPQSEIQKKLDEGAPYVIRMKVPDYISIMFEDIVRGPVEFDSATVDDQVLMKSDGFPTYHFASVIDDHLMEITHIIRGEEWLSSMPKHLLLYEFFGWEAPRFAHLPLLLNPDRSKLSKRQGDVAVEDFIAKGYSPDAILNFVALLGWNEGEGSEQEIYSLEELVQKFSLERVGKAGAVFNIDKLDWIEKQYIKARPVDQIIQAIKPLLQKELAEKSTDMDVARISSDEYLTQVIDLMRERVNFENEFITFSNYFYFDPETYDEAAVAKRWQDDTNEVLAEFITELEESDDFSADNIEAMLKAFVAPKGKKPAFLIHPLRILSSGVGFGPSLYHMLEVLGKQTVIRRLKKGIERVTV.

The 'HIGH' region motif lies at 15–25 (PSPTGYLHVGG). Positions 262-266 (KLSKR) match the 'KMSKS' region motif. Lys-265 contacts ATP.

The protein belongs to the class-I aminoacyl-tRNA synthetase family. Glutamate--tRNA ligase type 1 subfamily. In terms of assembly, monomer.

The protein localises to the cytoplasm. It catalyses the reaction tRNA(Glu) + L-glutamate + ATP = L-glutamyl-tRNA(Glu) + AMP + diphosphate. In terms of biological role, catalyzes the attachment of glutamate to tRNA(Glu) in a two-step reaction: glutamate is first activated by ATP to form Glu-AMP and then transferred to the acceptor end of tRNA(Glu). The sequence is that of Glutamate--tRNA ligase from Prosthecochloris aestuarii (strain DSM 271 / SK 413).